Consider the following 659-residue polypeptide: Protein kinase byr2 (659 aa).

The 64-residue stretch at 4-67 folds into the SAM domain; that stretch reads YTSKEVAEWL…LKQRDYLREF (64 aa). Residues 180–190 are compositionally biased toward low complexity; it reads PKLSSVLPTST. Disordered stretches follow at residues 180–209 and 354–387; these read PKLSSVLPTSTQKRSVRSNNAKPFESYQRP and SFSPGSSPSFIEQPSPISPTSTTSEDTNTLEEDT. Over residues 354–365 the composition is skewed to polar residues; it reads SFSPGSSPSFIE. Residues 367-380 show a composition bias toward low complexity; sequence PSPISPTSTTSEDT. A Protein kinase domain is found at 394–658; sequence WIRGALIGSG…ASELLSHPFV (265 aa). ATP-binding positions include 400–408 and K423; that span reads IGSGSFGQV. D522 serves as the catalytic Proton acceptor.

The protein belongs to the protein kinase superfamily. STE Ser/Thr protein kinase family. MAP kinase kinase kinase subfamily. In terms of assembly, interacts with rad24 and rad25; these prevent its translocation to the cell membrane during nitrogen starvation.

It is found in the cytoplasm. Its subcellular location is the cell membrane. It carries out the reaction L-seryl-[protein] + ATP = O-phospho-L-seryl-[protein] + ADP + H(+). The catalysed reaction is L-threonyl-[protein] + ATP = O-phospho-L-threonyl-[protein] + ADP + H(+). Its function is as follows. Serine/threonine protein kinase involved in conjugation and sporulation. It is thought that it phosphorylates the byr1 protein kinase which itself phosphorylate the spk1 kinase. This Schizosaccharomyces pombe (strain 972 / ATCC 24843) (Fission yeast) protein is Protein kinase byr2.